The chain runs to 545 residues: High-molecular-weight cytochrome c (545 aa).

A signal peptide spans 1 to 31; it reads MRNGRTLLRWAGVLAATAIIGVGGFWSQGTT. The heme c site is built by histidine 66, histidine 69, cysteine 80, cysteine 83, histidine 84, histidine 111, cysteine 114, cysteine 117, histidine 118, cysteine 135, cysteine 138, histidine 139, histidine 159, histidine 162, cysteine 178, cysteine 181, histidine 182, histidine 183, cysteine 202, cysteine 205, histidine 206, histidine 222, cysteine 225, cysteine 228, histidine 229, cysteine 244, cysteine 247, histidine 248, histidine 298, histidine 301, cysteine 308, cysteine 311, histidine 312, histidine 313, cysteine 319, cysteine 322, histidine 323, histidine 341, cysteine 349, cysteine 352, histidine 353, cysteine 362, cysteine 365, histidine 366, cysteine 378, cysteine 381, histidine 382, histidine 449, histidine 470, cysteine 477, cysteine 480, histidine 481, histidine 482, cysteine 493, cysteine 496, histidine 497, histidine 516, cysteine 519, cysteine 522, histidine 523, cysteine 536, cysteine 539, and histidine 540.

Monomer. Post-translationally, binds 16 heme c groups per subunit. High-spin heme 15 has single axial histidine ligand and the other hemes are low-spin bis-histidinyl coordinated.

It is found in the periplasm. Its function is as follows. HMWC (high-molecular-weight cytochrome c), ORF2, ORF3, ORF4, ORF5 and ORF6 in the HMC operon form a transmembrane protein complex that allows electron flow from the periplasmic hydrogenase to the cytoplasmic enzymes that catalyze reduction of sulfates. In Nitratidesulfovibrio vulgaris (strain ATCC 29579 / DSM 644 / CCUG 34227 / NCIMB 8303 / VKM B-1760 / Hildenborough) (Desulfovibrio vulgaris), this protein is High-molecular-weight cytochrome c (hmcA).